The following is a 229-amino-acid chain: Heptaprenylglyceryl phosphate synthase (229 aa).

Residue lysine 12 participates in sn-glycerol 1-phosphate binding. Mg(2+)-binding residues include aspartate 14 and serine 40. Residues 159-164 (YLEYSG), glycine 189, and 209-210 (GN) each bind sn-glycerol 1-phosphate.

This sequence belongs to the GGGP/HepGP synthase family. Group I subfamily. Homodimer. Mg(2+) serves as cofactor.

It catalyses the reaction sn-glycerol 1-phosphate + all-trans-heptaprenyl diphosphate = 3-heptaprenyl-sn-glycero-1-phosphate + diphosphate. Its pathway is membrane lipid metabolism; glycerophospholipid metabolism. In terms of biological role, prenyltransferase that catalyzes in vivo the transfer of the heptaprenyl moiety of heptaprenyl pyrophosphate (HepPP; 35 carbon atoms) to the C3 hydroxyl of sn-glycerol-1-phosphate (G1P), producing heptaprenylglyceryl phosphate (HepGP). This reaction is an ether-bond-formation step in the biosynthesis of archaea-type G1P-based membrane lipids found in Bacillales. The chain is Heptaprenylglyceryl phosphate synthase from Bacillus cereus (strain AH187).